A 139-amino-acid polypeptide reads, in one-letter code: Protein archease (139 aa).

The Ca(2+) site is built by Asp-12, Asp-138, and Ile-139.

This sequence belongs to the archease family.

Its function is as follows. Activates the tRNA-splicing ligase complex by facilitating the enzymatic turnover of catalytic subunit RtcB. Acts by promoting the guanylylation of RtcB, a key intermediate step in tRNA ligation. Can also alter the NTP specificity of RtcB such that ATP, dGTP or ITP is used efficiently. The protein is Protein archease of Saccharolobus islandicus (strain Y.G.57.14 / Yellowstone #1) (Sulfolobus islandicus).